A 498-amino-acid polypeptide reads, in one-letter code: Pentatricopeptide repeat-containing protein At2g15980 (498 aa).

7 PPR repeats span residues 244 to 274 (NATT…MEEE), 280 to 314 (NVYS…GVVY), 315 to 349 (DIVA…GIEC), 350 to 384 (TCLT…GFEA), 385 to 423 (DGLT…MFYP), 424 to 458 (SRNC…GFKP), and 459 to 489 (SQET…MAES).

It belongs to the PPR family. P subfamily.

This is Pentatricopeptide repeat-containing protein At2g15980 from Arabidopsis thaliana (Mouse-ear cress).